The following is a 312-amino-acid chain: MKVAVLGAAGGIGQALALLLKTQLPSGSELSLYDIAPVTPGVAVDLSHIPTDVKIKGFSGEDATPALEGADVVLISAGVARKPGMDRSDLFNVNAGIVKNLVQQIAKTCPQACIGVITNPVNTTVAIAAEVLKKAGVYDKNKLFGVTTLDIIRSNTFVAELKGKSATEVEVPVIGGHSGVTILPLLSQIPGVSFSDQEVADLTKRIQNAGTEVVEAKAGGGSATLSMGQAAARFGLSLVRAMQGEKGVVECAYVEGDGHYARFFSQPLLLGKNGVEERQSIGKLSAFEQQALEGMLDTLKKDIALGEDFVNK.

Residues 7-13 (GAAGGIG) and Asp34 contribute to the NAD(+) site. Residues Arg81 and Arg87 each contribute to the substrate site. Residues Asn94 and 117–119 (ITN) contribute to the NAD(+) site. The substrate site is built by Asn119 and Arg153. Residue His177 is the Proton acceptor of the active site. Met227 contacts NAD(+).

This sequence belongs to the LDH/MDH superfamily. MDH type 1 family. Homodimer.

It carries out the reaction (S)-malate + NAD(+) = oxaloacetate + NADH + H(+). Its function is as follows. Catalyzes the reversible oxidation of malate to oxaloacetate. The sequence is that of Malate dehydrogenase from Klebsiella pneumoniae (strain 342).